A 310-amino-acid polypeptide reads, in one-letter code: Phosphoribosylaminoimidazole-succinocarboxamide synthase (310 aa).

This sequence belongs to the SAICAR synthetase family.

The enzyme catalyses 5-amino-1-(5-phospho-D-ribosyl)imidazole-4-carboxylate + L-aspartate + ATP = (2S)-2-[5-amino-1-(5-phospho-beta-D-ribosyl)imidazole-4-carboxamido]succinate + ADP + phosphate + 2 H(+). The protein operates within purine metabolism; IMP biosynthesis via de novo pathway; 5-amino-1-(5-phospho-D-ribosyl)imidazole-4-carboxamide from 5-amino-1-(5-phospho-D-ribosyl)imidazole-4-carboxylate: step 1/2. The chain is Phosphoribosylaminoimidazole-succinocarboxamide synthase from Xanthomonas axonopodis pv. citri (strain 306).